A 407-amino-acid chain; its full sequence is 1-deoxy-D-xylulose 5-phosphate reductoisomerase (407 aa).

NADPH is bound by residues Thr-25, Gly-26, Ser-27, Ile-28, Asn-53, and Asn-136. 1-deoxy-D-xylulose 5-phosphate is bound at residue Lys-137. NADPH is bound at residue Glu-138. Mn(2+) is bound at residue Asp-162. Positions 163, 164, 188, and 211 each coordinate 1-deoxy-D-xylulose 5-phosphate. Mn(2+) is bound at residue Glu-164. Gly-217 contacts NADPH. 1-deoxy-D-xylulose 5-phosphate is bound by residues Ser-224, Asn-229, Lys-230, and Glu-233. Glu-233 contacts Mn(2+).

This sequence belongs to the DXR family. It depends on Mg(2+) as a cofactor. Mn(2+) is required as a cofactor.

It carries out the reaction 2-C-methyl-D-erythritol 4-phosphate + NADP(+) = 1-deoxy-D-xylulose 5-phosphate + NADPH + H(+). It functions in the pathway isoprenoid biosynthesis; isopentenyl diphosphate biosynthesis via DXP pathway; isopentenyl diphosphate from 1-deoxy-D-xylulose 5-phosphate: step 1/6. Functionally, catalyzes the NADPH-dependent rearrangement and reduction of 1-deoxy-D-xylulose-5-phosphate (DXP) to 2-C-methyl-D-erythritol 4-phosphate (MEP). This Nitrobacter hamburgensis (strain DSM 10229 / NCIMB 13809 / X14) protein is 1-deoxy-D-xylulose 5-phosphate reductoisomerase.